The following is a 288-amino-acid chain: MRIRVPATTANLGPGFDSCGLALTLYLTLDIGAEADSWYIEHNIGGGIPHDETNVIIETALNLAPNLTPHHLVMTCDIPPARGLGSSSAAVVAGIELANTLAELNLSKEEKVRIAAEIEGHPDNVAPAVLGNWVVGAKLDGEDFYVRHLFPDCALIAFIPKAELLTSESRGVLPDTLPFKEAVQASSIANVMIAAILRNDMTLAGEMMERDLWHEKYRSQLVPHLAQIRDVAKNQGAYAACLSGAGPTVLVFAPRNLANKLQTSLQTLEIDADVLLLDVEGSGAEVFR.

79-89 (PPARGLGSSSA) serves as a coordination point for ATP.

The protein belongs to the GHMP kinase family. Homoserine kinase subfamily.

It localises to the cytoplasm. The catalysed reaction is L-homoserine + ATP = O-phospho-L-homoserine + ADP + H(+). It participates in amino-acid biosynthesis; L-threonine biosynthesis; L-threonine from L-aspartate: step 4/5. In terms of biological role, catalyzes the ATP-dependent phosphorylation of L-homoserine to L-homoserine phosphate. The polypeptide is Homoserine kinase (Listeria monocytogenes serovar 1/2a (strain ATCC BAA-679 / EGD-e)).